Consider the following 769-residue polypeptide: Trehalose 6-phosphate phosphorylase (769 aa).

342–343 is a binding site for substrate; it reads WD. Glutamate 480 functions as the Proton donor in the catalytic mechanism. 589–590 is a substrate binding site; that stretch reads KQ.

The protein belongs to the glycosyl hydrolase 65 family. As to quaternary structure, monomer.

It carries out the reaction alpha,alpha-trehalose 6-phosphate + phosphate = beta-D-glucose 1-phosphate + D-glucose 6-phosphate. Functionally, catalyzes the conversion of trehalose 6-phosphate into glucose 1-phosphate and glucose 6-phosphate. The polypeptide is Trehalose 6-phosphate phosphorylase (trePP) (Lactococcus lactis subsp. lactis (strain IL1403) (Streptococcus lactis)).